A 156-amino-acid polypeptide reads, in one-letter code: Cyanate hydratase (156 aa).

Catalysis depends on residues Arg96, Glu99, and Ser122.

The protein belongs to the cyanase family.

It catalyses the reaction cyanate + hydrogencarbonate + 3 H(+) = NH4(+) + 2 CO2. In terms of biological role, catalyzes the reaction of cyanate with bicarbonate to produce ammonia and carbon dioxide. The sequence is that of Cyanate hydratase from Pseudomonas aeruginosa (strain LESB58).